A 537-amino-acid chain; its full sequence is 2-isopropylmalate synthase (537 aa).

Residues 8–269 (VLIFDTTLRD…YFNGYLGRAE (262 aa)) enclose the Pyruvate carboxyltransferase domain. Mn(2+) contacts are provided by Asp17, His208, His210, and Asn244. Residues 408 to 537 (QLAGVQVSCG…QRAPLPAPAL (130 aa)) are regulatory domain.

Belongs to the alpha-IPM synthase/homocitrate synthase family. LeuA type 1 subfamily. Homodimer. Requires Mn(2+) as cofactor.

It localises to the cytoplasm. It catalyses the reaction 3-methyl-2-oxobutanoate + acetyl-CoA + H2O = (2S)-2-isopropylmalate + CoA + H(+). It functions in the pathway amino-acid biosynthesis; L-leucine biosynthesis; L-leucine from 3-methyl-2-oxobutanoate: step 1/4. Its function is as follows. Catalyzes the condensation of the acetyl group of acetyl-CoA with 3-methyl-2-oxobutanoate (2-ketoisovalerate) to form 3-carboxy-3-hydroxy-4-methylpentanoate (2-isopropylmalate). The protein is 2-isopropylmalate synthase of Synechococcus sp. (strain RCC307).